Reading from the N-terminus, the 285-residue chain is Shikimate dehydrogenase (NADP(+)) (285 aa).

Shikimate-binding positions include 19-21 and T66; that span reads SLS. The active-site Proton acceptor is K70. Residues N91 and D107 each contribute to the shikimate site. Residues 129 to 133 and L228 each bind NADP(+); that span reads GSGGA. Shikimate is bound at residue Y230. Position 251 (G251) interacts with NADP(+).

It belongs to the shikimate dehydrogenase family. As to quaternary structure, homodimer.

The catalysed reaction is shikimate + NADP(+) = 3-dehydroshikimate + NADPH + H(+). It functions in the pathway metabolic intermediate biosynthesis; chorismate biosynthesis; chorismate from D-erythrose 4-phosphate and phosphoenolpyruvate: step 4/7. Functionally, involved in the biosynthesis of the chorismate, which leads to the biosynthesis of aromatic amino acids. Catalyzes the reversible NADPH linked reduction of 3-dehydroshikimate (DHSA) to yield shikimate (SA). This is Shikimate dehydrogenase (NADP(+)) from Prochlorococcus marinus (strain MIT 9515).